The sequence spans 463 residues: Asparagine--tRNA ligase (463 aa).

The protein belongs to the class-II aminoacyl-tRNA synthetase family. As to quaternary structure, homodimer.

The protein resides in the cytoplasm. It carries out the reaction tRNA(Asn) + L-asparagine + ATP = L-asparaginyl-tRNA(Asn) + AMP + diphosphate + H(+). The chain is Asparagine--tRNA ligase from Desulfitobacterium hafniense (strain Y51).